The following is a 239-amino-acid chain: Ribosomal RNA small subunit methyltransferase G (239 aa).

S-adenosyl-L-methionine is bound by residues glycine 77, phenylalanine 82, 128–129, and arginine 146; that span reads AE. The segment at 215–239 is disordered; sequence DKKRQTPKKYPRKPGTPNKTPLLEK.

Belongs to the methyltransferase superfamily. RNA methyltransferase RsmG family.

The protein resides in the cytoplasm. Specifically methylates the N7 position of guanine in position 535 of 16S rRNA. This is Ribosomal RNA small subunit methyltransferase G from Staphylococcus aureus (strain bovine RF122 / ET3-1).